Reading from the N-terminus, the 671-residue chain is MALSVNDCARLTGQSVPTMEHFLPLRNIWNRVRDFPRASTTAAGITWMSRYIYGYHRLMLEDLAPGAPATLRWPLYRQPPPHFLVGYQYLVRTCNDYVFDSRAYSRLRYTELSQPGHQTVNWSVMANCTYTINTGAYHRFVDMDDFQSTLTQVQQAILAERVVADLALLQPMRGFGVTRMGGRGRHLRPNSAAAAAIDARDAGQEEGEEEVPVERLMQDYYKDLRRCQNEAWGMADRLRIQQAGPKDMVLLSTIRRLKTAYFNYIISSTSARNNPDRRPLPPATVLSLPCDCDWLDAFLERFSDPVDADSLRSLGGGVPTQQLLRCIVSAVSLPHGSPPPTHNRDMTGGVFQLRPRENGRAVTETMRRRRGEMIERFVDRLPVRRRRRRVPPPPPPPEEEEGEALMEEEIEEEEEAPVAFEREVRDTVAELIRLLEEELTVSARNSQFFNFAVDFYEAMERLEALGDINESTLRRWVMYFFVAEHTATTLNYLFQRLRNYAVFARHVELNLAQVVMRARDAEGGVVYSRVWNEGGLNAFSQLMARISNDLAATVERAGRGDLQEEEIEQFMAEIAYQDNSGDVQEILRQAAVNDTEIDSVELSFRLKLTGPVVFTQRRQIQEINRRVVAFASNLRAQHQLLPARGADVPLPPLPAGPEPPLPPGARPRHRF.

Positions Arg380 to Arg389 match the Nuclear localization signal motif. The interval Arg386 to Glu411 is disordered. Residues Pro397 to Glu411 show a composition bias toward acidic residues. Position 580 is an O-(5'-phospho-DNA)-serine (Ser580). A disordered region spans residues Gly645–Phe671. A compositionally biased stretch (pro residues) spans Pro649–Ala665.

The protein belongs to the adenoviridae terminal protein family. Heterodimer with the polymerase; this heterodimer binds to bp 9 to 18 of the genome. Interacts with host POU2F1; POU2F1 binds to the auxiliary sequences in the inverted terminal repeats and tethers the pTP-POL heterodimer to the origin DNA thereby participating in the assembly of the pre-initiation complex (POL-TP-DBP-NFIA-POU2F1). Preterminal protein is used to replicate viral genome, upon genomic encapsidation it is processed first into iTP and finally into TP by adenovirus protease.

The protein localises to the host nucleus matrix. Protein covalently bound to the viral DNA that acts as a primer for viral genomic replication by DNA strand displacement. Assembles on the viral origin of replication in an initiation complex with viral polymerase, DBP, host NFIA and host POU2F1/OCT1. During initiation, the polymerase covalently couples the first dCTP with Ser-580 of pTP. The terminal protein stimulates the template activity over 20 fold compared to protein-free templates. Neo-synthesized viral genomes are linked to two preterminal proteins, one for each 5' end. These new genomes are encapsidated in the nucleus, and during capsid maturation by viral protease, preterminal protein is first cleaved into intermediary (iTP), then into mature TP. May play a role in host nuclear matrix localization of genomic DNA. In Human adenovirus C serotype 5 (HAdV-5), this protein is Preterminal protein.